Reading from the N-terminus, the 123-residue chain is Plasminogen (123 aa).

Residues 40 to 118 enclose the Kringle domain; the sequence is DCYHGNGQSY…RWEFCNLKKC (79 aa). Disulfide bonds link Cys41-Cys118, Cys62-Cys101, and Cys90-Cys113.

The protein belongs to the peptidase S1 family. Plasminogen subfamily. In terms of assembly, interacts with CSPG4 and AMOT. Interacts (via the Kringle domains) with HRG; the interaction tethers PLG to the cell surface and enhances its activation. Interacts (via Kringle 4 domain) with ADA; the interaction stimulates PLG activation when in complex with DPP4. Angiostatin: Interacts with ATP5F1A; the interaction inhibits most of the angiogenic effects of angiostatin.

The protein resides in the secreted. The catalysed reaction is Preferential cleavage: Lys-|-Xaa &gt; Arg-|-Xaa, higher selectivity than trypsin. Converts fibrin into soluble products.. Its activity is regulated as follows. Converted into plasmin by plasminogen activators, both plasminogen and its activator being bound to fibrin. Cannot be activated with streptokinase. Functionally, plasmin dissolves the fibrin of blood clots and acts as a proteolytic factor in a variety of other processes including embryonic development, tissue remodeling, tumor invasion, and inflammation. In ovulation, weakens the walls of the Graafian follicle. It activates the urokinase-type plasminogen activator, collagenases and several complement zymogens, such as C1, C4 and C5. Cleavage of fibronectin and laminin leads to cell detachment and apoptosis. Also cleaves fibrin, thrombospondin and von Willebrand factor. Its role in tissue remodeling and tumor invasion may be modulated by CSPG4. Binds to cells. The protein is Plasminogen (PLG) of Capra hircus (Goat).